Consider the following 343-residue polypeptide: C5a anaphylatoxin chemotactic receptor 2 (343 aa).

Topologically, residues Met1–Leu44 are extracellular. A glycan (N-linked (GlcNAc...) asparagine) is linked at Asn3. Residues Leu45 to Trp67 form a helical membrane-spanning segment. Residues Lys68–Trp78 are Cytoplasmic-facing. A helical membrane pass occupies residues Phe79 to Ala101. Topologically, residues Gln102–Thr120 are extracellular. A disulfide bridge connects residues Cys113 and Cys192. A helical membrane pass occupies residues Val121–Phe143. Residues Arg144–Cys155 lie on the Cytoplasmic side of the membrane. Residues Gly156–Tyr178 form a helical membrane-spanning segment. Over Arg179–Thr208 the chain is Extracellular. Residues Val209–Arg231 traverse the membrane as a helical segment. Residues Gln232–Ala243 are Cytoplasmic-facing. Residues Val244–Ser266 form a helical membrane-spanning segment. The Extracellular portion of the chain corresponds to Ser267–Pro280. A helical membrane pass occupies residues Leu281 to Phe300. The Cytoplasmic portion of the chain corresponds to Gly301–Val343. Ser326 is subject to Phosphoserine.

This sequence belongs to the G-protein coupled receptor 1 family. Interacts with C3 (the anaphylatoxin peptide C3a and the adipogenic hormone ASP); the interaction occurs with higher affinity for ASP, enhancing the phosphorylation and activation of GPR77, recruitment of ARRB2 to the cell surface and endocytosis of GRP77.

It localises to the cell membrane. Its function is as follows. Receptor for the chemotactic and inflammatory C3a, C4a and C5a anaphylatoxin peptides and also for their dearginated forms ASP/C3adesArg, C4adesArg and C5adesArg respectively. Couples weakly to G(i)-mediated signaling pathways. The protein is C5a anaphylatoxin chemotactic receptor 2 (C5ar2) of Rattus norvegicus (Rat).